We begin with the raw amino-acid sequence, 217 residues long: MKKNEYFNEIEKIYKEMSSHFKERLKEFKNIWENGTNKDIHLELSFCILTPQSKALNAWQAITNLKKDDLIYNGKAEELVEFLNIVRFKNNKSKYLVELREKMMKDGEIITKDFFNTLPTVAEKREWIVKNIKGMSYKEASHFLRNVGFGENIAILDRHILRNLVKLEVIDELPKTLTPKLYLEIEEKMRDYCEFVKIPMDEMDLLLWYKEAGVIFK.

Active-site residues include K138 and D157.

The protein belongs to the type-2 OGG1 family.

It carries out the reaction 2'-deoxyribonucleotide-(2'-deoxyribose 5'-phosphate)-2'-deoxyribonucleotide-DNA = a 3'-end 2'-deoxyribonucleotide-(2,3-dehydro-2,3-deoxyribose 5'-phosphate)-DNA + a 5'-end 5'-phospho-2'-deoxyribonucleoside-DNA + H(+). In terms of biological role, catalyzes the excision of an oxidatively damaged form of guanine (7,8-dihydro-8-oxoguanine = 8-oxoG) from DNA. Also cleaves the DNA backbone at apurinic/apyrimidinic sites (AP sites). The chain is 8-oxoguanine DNA glycosylase/AP lyase from Fusobacterium nucleatum subsp. nucleatum (strain ATCC 25586 / DSM 15643 / BCRC 10681 / CIP 101130 / JCM 8532 / KCTC 2640 / LMG 13131 / VPI 4355).